A 320-amino-acid polypeptide reads, in one-letter code: Delta(7)-sterol 5(6)-desaturase erg3C (320 aa).

Helical transmembrane passes span 43–63, 91–111, and 127–147; these read VISI…FFSA, SSLS…LAEV, and PWLV…IYWI. The Fatty acid hydroxylase domain occupies 134 to 283; that stretch reads ILYMAFNDIG…FTWADAYFGS (150 aa). The Histidine box-1 motif lies at 148–152; it reads HRLEH. Residues 161-165 carry the Histidine box-2 motif; it reads HKPHH. A helical membrane pass occupies residues 224–244; that stretch reads YMVLFAAVQIWTILIHDGDMI. Positions 259 to 263 match the Histidine box-3 motif; the sequence is HTLHH.

Belongs to the sterol desaturase family. Fe cation serves as cofactor.

The protein resides in the endoplasmic reticulum membrane. Functionally, delta(7)-sterol 5(6)-desaturase; part of the third module of ergosterol biosynthesis pathway that includes the late steps of the pathway. Erg3C is a minor delta(7)-sterol 5(6)-desaturase within the ergosterol pathway, erg3B being the major one. The third module or late pathway involves the ergosterol synthesis itself through consecutive reactions that mainly occur in the endoplasmic reticulum (ER) membrane. Firstly, the squalene synthase erg9 catalyzes the condensation of 2 farnesyl pyrophosphate moieties to form squalene, which is the precursor of all steroids. Squalene synthase is crucial for balancing the incorporation of farnesyl diphosphate (FPP) into sterol and nonsterol isoprene synthesis. Secondly, squalene is converted into lanosterol by the consecutive action of the squalene epoxidase erg1 and the lanosterol synthase erg7. Then, the delta(24)-sterol C-methyltransferase erg6 methylates lanosterol at C-24 to produce eburicol. Eburicol is the substrate of the sterol 14-alpha demethylase encoded by cyp51A and cyp51B, to yield 4,4,24-trimethyl ergosta-8,14,24(28)-trienol. The C-14 reductase erg24 then reduces the C14=C15 double bond which leads to 4,4-dimethylfecosterol. A sequence of further demethylations at C-4, involving the C-4 demethylation complex containing the C-4 methylsterol oxidases erg25A or erg25B, the sterol-4-alpha-carboxylate 3-dehydrogenase erg26 and the 3-keto-steroid reductase erg27, leads to the production of fecosterol via 4-methylfecosterol. The C-8 sterol isomerase erg2 then catalyzes the reaction which results in unsaturation at C-7 in the B ring of sterols and thus converts fecosterol to episterol. The sterol-C5-desaturase erg3B then catalyzes the introduction of a C-5 double bond in the B ring to produce 5-dehydroepisterol. The 2 other sterol-C5-desaturases, erg3A and erg3C, seem to be less important in ergosterol biosynthesis. The C-22 sterol desaturase erg5 further converts 5-dehydroepisterol into ergosta-5,7,22,24(28)-tetraen-3beta-ol by forming the C-22(23) double bond in the sterol side chain. Finally, ergosta-5,7,22,24(28)-tetraen-3beta-ol is substrate of the C-24(28) sterol reductases erg4A and erg4B to produce ergosterol. Possible alternative sterol biosynthetic pathways might exist from fecosterol to ergosterol, depending on the activities of the erg3 isoforms. The chain is Delta(7)-sterol 5(6)-desaturase erg3C from Aspergillus fumigatus (strain ATCC MYA-4609 / CBS 101355 / FGSC A1100 / Af293) (Neosartorya fumigata).